Consider the following 428-residue polypeptide: Gamma-glutamyl phosphate reductase (428 aa).

The protein belongs to the gamma-glutamyl phosphate reductase family.

The protein localises to the cytoplasm. The enzyme catalyses L-glutamate 5-semialdehyde + phosphate + NADP(+) = L-glutamyl 5-phosphate + NADPH + H(+). The protein operates within amino-acid biosynthesis; L-proline biosynthesis; L-glutamate 5-semialdehyde from L-glutamate: step 2/2. Catalyzes the NADPH-dependent reduction of L-glutamate 5-phosphate into L-glutamate 5-semialdehyde and phosphate. The product spontaneously undergoes cyclization to form 1-pyrroline-5-carboxylate. The polypeptide is Gamma-glutamyl phosphate reductase (Agrobacterium fabrum (strain C58 / ATCC 33970) (Agrobacterium tumefaciens (strain C58))).